We begin with the raw amino-acid sequence, 698 residues long: MSKSSPIEPVSASDVSQQFRDPGLYLNRELSQLDFNFRVLAQALDEQVPLLERLRFLCISCTNLDEFFEIRVATVRHAQEFGLPPAPDGMRPTVILNAVHDLTTKLVHDQYNCWNQVLCPALASLGVGVLSHNSWNVRQKRWLRGYFRNEIMPVLSPLGLDPAHPFPKIFNKTLNIVVVLNGIDAFGRAGHLAIVRAPRSLPRIIELPQHLSRDGSQNFVFLSSVLSAFVGELFPGMVVKGAYQFRVTRNSELVVDEDEVENLALALRNELVTRGYRLAVRLEIAEDCPIPIVRTLLQNFGLQENAVYRINGPVNLSRVSQVYDMVLRPELKYPPFNPRTVRNSDHIFEIIAKGDVLLYHPYDAFTAVLDLLRQAAADPDVLAIKQTLYRTGKDSTIVDALIQAARSGKDVTVVVELRARFDEEANLGLADKLQEAGVQVVYGVVGYKTHAKMLLIVRREGRKLRRYVHLGTGNYHSGTARIYTDLSLMTANAAIGKDVHQLFLQLSGLAPKMKLECLLQSPFTLHAGVLFRIERETTFARKGCPARIVAKMNALNEPQVVRALYVASQAGVQIDLIVRGACTLRPGVQGISENIRVRSIVGRFLEHSRVYWFANNGTPELFCASADWLERNLLRRVEICFPILNPDLAKRIYSDVLQSYLDDNLNAWELGSDGVYRKLLPETDHAPYSAQAALLESL.

Asn-63 provides a ligand contact to ATP. The Mg(2+) site is built by Arg-390 and Arg-420. His-450 serves as the catalytic Phosphohistidine intermediate. ATP contacts are provided by Tyr-483, Arg-579, and His-607.

Belongs to the polyphosphate kinase 1 (PPK1) family. Mg(2+) serves as cofactor. An intermediate of this reaction is the autophosphorylated ppk in which a phosphate is covalently linked to a histidine residue through a N-P bond.

The enzyme catalyses [phosphate](n) + ATP = [phosphate](n+1) + ADP. Functionally, catalyzes the reversible transfer of the terminal phosphate of ATP to form a long-chain polyphosphate (polyP). The polypeptide is Polyphosphate kinase (Xylella fastidiosa (strain Temecula1 / ATCC 700964)).